The following is a 427-amino-acid chain: mRNA cap guanine-N(7) methyltransferase (427 aa).

Residues 1–79 are disordered; the sequence is MSLNYEQNAA…EPETEAASGA (79 aa). Phosphoserine occurs at positions 22, 24, 29, 46, and 48. The span at 44–57 shows a compositional bias: basic and acidic residues; the sequence is HVSKSPREYYDEPG. One can recognise an mRNA cap 0 methyltransferase domain in the interval 103 to 411; the sequence is SKIFFMRNFN…LYLVCAFKKC (309 aa). Position 112 to 113 (112 to 113) interacts with mRNA; it reads NN. The S-adenosyl-L-methionine site is built by lysine 116, cysteine 143, aspartate 165, aspartate 202, glutamine 225, and tyrosine 230.

Belongs to the class I-like SAM-binding methyltransferase superfamily. mRNA cap 0 methyltransferase family.

Its subcellular location is the nucleus. The catalysed reaction is a 5'-end (5'-triphosphoguanosine)-ribonucleoside in mRNA + S-adenosyl-L-methionine = a 5'-end (N(7)-methyl 5'-triphosphoguanosine)-ribonucleoside in mRNA + S-adenosyl-L-homocysteine. Its function is as follows. mRNA-capping methyltransferase that methylates the N7 position of the added guanosine to the 5'-cap structure of mRNAs. Binds RNA containing 5'-terminal GpppC. The polypeptide is mRNA cap guanine-N(7) methyltransferase (Drosophila melanogaster (Fruit fly)).